A 419-amino-acid polypeptide reads, in one-letter code: Serine--tRNA ligase (419 aa).

L-serine is bound at residue 226–228 (TSE). ATP contacts are provided by residues 257–259 (RRE) and Val-273. Glu-280 serves as a coordination point for L-serine. 344-347 (ELTS) contacts ATP. Residue Thr-379 coordinates L-serine.

It belongs to the class-II aminoacyl-tRNA synthetase family. Type-1 seryl-tRNA synthetase subfamily. In terms of assembly, homodimer. The tRNA molecule binds across the dimer.

It is found in the cytoplasm. The enzyme catalyses tRNA(Ser) + L-serine + ATP = L-seryl-tRNA(Ser) + AMP + diphosphate + H(+). It carries out the reaction tRNA(Sec) + L-serine + ATP = L-seryl-tRNA(Sec) + AMP + diphosphate + H(+). Its pathway is aminoacyl-tRNA biosynthesis; selenocysteinyl-tRNA(Sec) biosynthesis; L-seryl-tRNA(Sec) from L-serine and tRNA(Sec): step 1/1. Functionally, catalyzes the attachment of serine to tRNA(Ser). Is also able to aminoacylate tRNA(Sec) with serine, to form the misacylated tRNA L-seryl-tRNA(Sec), which will be further converted into selenocysteinyl-tRNA(Sec). In Mycobacterium tuberculosis (strain CDC 1551 / Oshkosh), this protein is Serine--tRNA ligase.